A 389-amino-acid polypeptide reads, in one-letter code: Succinate--CoA ligase [ADP-forming] subunit beta (389 aa).

Residues 9 to 236 (RDMFEAHGVP…KDAADPLEAK (228 aa)) form the ATP-grasp domain. Residues lysine 45, 52–54 (GRG), alanine 94, and glutamate 99 each bind ATP. Positions 191 and 205 each coordinate Mg(2+). Substrate contacts are provided by residues asparagine 256 and 318 to 320 (GIT).

The protein belongs to the succinate/malate CoA ligase beta subunit family. Heterotetramer of two alpha and two beta subunits. Mg(2+) is required as a cofactor.

The enzyme catalyses succinate + ATP + CoA = succinyl-CoA + ADP + phosphate. It catalyses the reaction GTP + succinate + CoA = succinyl-CoA + GDP + phosphate. It functions in the pathway carbohydrate metabolism; tricarboxylic acid cycle; succinate from succinyl-CoA (ligase route): step 1/1. Its function is as follows. Succinyl-CoA synthetase functions in the citric acid cycle (TCA), coupling the hydrolysis of succinyl-CoA to the synthesis of either ATP or GTP and thus represents the only step of substrate-level phosphorylation in the TCA. The beta subunit provides nucleotide specificity of the enzyme and binds the substrate succinate, while the binding sites for coenzyme A and phosphate are found in the alpha subunit. This chain is Succinate--CoA ligase [ADP-forming] subunit beta, found in Pseudarthrobacter chlorophenolicus (strain ATCC 700700 / DSM 12829 / CIP 107037 / JCM 12360 / KCTC 9906 / NCIMB 13794 / A6) (Arthrobacter chlorophenolicus).